Here is a 252-residue protein sequence, read N- to C-terminus: Flap endonuclease Xni (252 aa).

Position 103 (aspartate 103) interacts with Mg(2+). One can recognise a 5'-3' exonuclease domain in the interval 159-248 (VLPEQLPDYW…LKGNLQQLRL (90 aa)). K(+) is bound by residues leucine 170, alanine 171, proline 179, isoleucine 181, and isoleucine 184. The tract at residues 183–188 (GIGPKT) is interaction with DNA.

Belongs to the Xni family. Requires Mg(2+) as cofactor. K(+) serves as cofactor.

Its function is as follows. Has flap endonuclease activity. During DNA replication, flap endonucleases cleave the 5'-overhanging flap structure that is generated by displacement synthesis when DNA polymerase encounters the 5'-end of a downstream Okazaki fragment. The sequence is that of Flap endonuclease Xni from Photorhabdus laumondii subsp. laumondii (strain DSM 15139 / CIP 105565 / TT01) (Photorhabdus luminescens subsp. laumondii).